Reading from the N-terminus, the 95-residue chain is Small ribosomal subunit protein bS6 (95 aa).

This sequence belongs to the bacterial ribosomal protein bS6 family.

Functionally, binds together with bS18 to 16S ribosomal RNA. This is Small ribosomal subunit protein bS6 from Corynebacterium efficiens (strain DSM 44549 / YS-314 / AJ 12310 / JCM 11189 / NBRC 100395).